A 201-amino-acid polypeptide reads, in one-letter code: Small ribosomal subunit protein uS4c (201 aa).

Positions 14–43 are disordered; it reads RLGALPGLTSKRPRAGSDLRNQSRPGKKSQ. Residues 89–169 enclose the S4 RNA-binding domain; sequence MRLDNILFRL…LPKHLTFHTL (81 aa).

Belongs to the universal ribosomal protein uS4 family. In terms of assembly, part of the 30S ribosomal subunit. Contacts protein S5. The interaction surface between S4 and S5 is involved in control of translational fidelity.

Its subcellular location is the plastid. It is found in the chloroplast. One of the primary rRNA binding proteins, it binds directly to 16S rRNA where it nucleates assembly of the body of the 30S subunit. In terms of biological role, with S5 and S12 plays an important role in translational accuracy. The sequence is that of Small ribosomal subunit protein uS4c (rps4) from Gossypium hirsutum (Upland cotton).